A 239-amino-acid polypeptide reads, in one-letter code: tRNA (guanine-N(7)-)-methyltransferase (239 aa).

Glu-69, Glu-94, Asp-121, and Asp-144 together coordinate S-adenosyl-L-methionine. The active site involves Asp-144. Position 148 (Lys-148) interacts with substrate. The tract at residues Arg-150–Arg-155 is interaction with RNA. Substrate contacts are provided by residues Asp-180 and Thr-217–Glu-220.

This sequence belongs to the class I-like SAM-binding methyltransferase superfamily. TrmB family. Monomer.

It carries out the reaction guanosine(46) in tRNA + S-adenosyl-L-methionine = N(7)-methylguanosine(46) in tRNA + S-adenosyl-L-homocysteine. Its pathway is tRNA modification; N(7)-methylguanine-tRNA biosynthesis. Functionally, catalyzes the formation of N(7)-methylguanine at position 46 (m7G46) in tRNA. The polypeptide is tRNA (guanine-N(7)-)-methyltransferase (Shigella boydii serotype 4 (strain Sb227)).